A 302-amino-acid polypeptide reads, in one-letter code: Recombination-associated protein RdgC (302 aa).

Belongs to the RdgC family.

Its subcellular location is the cytoplasm. It is found in the nucleoid. Its function is as follows. May be involved in recombination. The chain is Recombination-associated protein RdgC from Mannheimia succiniciproducens (strain KCTC 0769BP / MBEL55E).